The primary structure comprises 245 residues: UDP-2,3-diacylglucosamine hydrolase (245 aa).

Residues D8, H10, D41, N80, and H115 each coordinate Mn(2+). 80–81 (NR) contacts substrate. Substrate contacts are provided by D123, S161, K165, K168, and H196. The Mn(2+) site is built by H196 and H198.

The protein belongs to the LpxH family. Mn(2+) is required as a cofactor.

Its subcellular location is the cell inner membrane. It carries out the reaction UDP-2-N,3-O-bis[(3R)-3-hydroxytetradecanoyl]-alpha-D-glucosamine + H2O = 2-N,3-O-bis[(3R)-3-hydroxytetradecanoyl]-alpha-D-glucosaminyl 1-phosphate + UMP + 2 H(+). Its pathway is glycolipid biosynthesis; lipid IV(A) biosynthesis; lipid IV(A) from (3R)-3-hydroxytetradecanoyl-[acyl-carrier-protein] and UDP-N-acetyl-alpha-D-glucosamine: step 4/6. In terms of biological role, hydrolyzes the pyrophosphate bond of UDP-2,3-diacylglucosamine to yield 2,3-diacylglucosamine 1-phosphate (lipid X) and UMP by catalyzing the attack of water at the alpha-P atom. Involved in the biosynthesis of lipid A, a phosphorylated glycolipid that anchors the lipopolysaccharide to the outer membrane of the cell. The sequence is that of UDP-2,3-diacylglucosamine hydrolase from Psychromonas ingrahamii (strain DSM 17664 / CCUG 51855 / 37).